The primary structure comprises 117 residues: Ribosome-binding factor A (117 aa).

The protein belongs to the RbfA family. As to quaternary structure, monomer. Binds 30S ribosomal subunits, but not 50S ribosomal subunits or 70S ribosomes.

The protein localises to the cytoplasm. Its function is as follows. One of several proteins that assist in the late maturation steps of the functional core of the 30S ribosomal subunit. Associates with free 30S ribosomal subunits (but not with 30S subunits that are part of 70S ribosomes or polysomes). Required for efficient processing of 16S rRNA. May interact with the 5'-terminal helix region of 16S rRNA. In Syntrophobacter fumaroxidans (strain DSM 10017 / MPOB), this protein is Ribosome-binding factor A.